A 642-amino-acid polypeptide reads, in one-letter code: MGQLSSLTSVWMVVVVTSWVIIAANIDTVEARSCSECHSNATCMEDGMVTTCSCLVGFTGSGFECVDLDECAIPGAHNCSEGSSCMNTLGSYLCTCPDGFRLTPGLGCIDVDECSEPGLSRCHALATCINNKGNYSCVCPAGYRGDGQHCECSPGSCGPGLDCVPVGDALVCADPCQEHRILDEYWRSTEYGAGYTCDVGLNGWYRFTGPGGVRLAETCVPVLHCNTAAPMWLNGTHPTRDQGIVNRTACAHWRGHCCLWDASIQVKACAGGYYVYNLTETPECYLAYCTDPTSVLGTCEECSVEEDCKSHDGMWSCQCKQDFNVTDLFLLDRLECRPNDIKVSLSKCQLKSLGFEKVFMYLRDSQCSGFNERGDRDWVSVVTPARDGPCGTVMVRNETHATYSNTLYLADEIVIRDRNIKINFECSYPLDMKVSLETSLQPIVSSLNISVGGTGMFTVRMALFQTPDYTQPYQGSSVTLTTEAFLYVGTMLDGGDLSRFALLMTNCYATPSSNATDPLKYFIIQDRCPRTTDSTIQVVENGESPQGRFSVQMFRFAGNYDLVYLHCEVYLCDIINEKCKPTCSGTRFRSGGIIDQSRVLNLGPITRKNVQAVVSRAASSSLGFLKVCLPLLLSATLTLMFQ.

A signal peptide spans 1 to 26; it reads MGQLSSLTSVWMVVVVTSWVIIAANI. One can recognise an EGF-like 1 domain in the interval 32–64; the sequence is RSCSECHSNATCMEDGMVTTCSCLVGFTGSGFE. Cystine bridges form between C34-C43, C37-C52, C54-C65, C71-C85, C79-C94, C96-C108, C114-C128, C122-C137, C139-C150, C152-C163, C157-C172, C176-C269, C197-C284, C219-C257, C225-C289, C250-C258, C299-C308, C302-C317, C319-C348, C336-C426, and C367-C390. N40 carries N-linked (GlcNAc...) asparagine glycosylation. In terms of domain architecture, EGF-like 2; calcium-binding spans 67–109; that stretch reads DLDECAIPGAHNCSEGSSCMNTLGSYLCTCPDGFRLTPGLGCI. N78 is a glycosylation site (N-linked (GlcNAc...) asparagine). The 42-residue stretch at 110 to 151 folds into the EGF-like 3; calcium-binding domain; that stretch reads DVDECSEPGLSRCHALATCINNKGNYSCVCPAGYRGDGQHCE. The N-linked (GlcNAc...) asparagine glycan is linked to N134. Positions 152 to 173 are beta hairpin; sequence CSPGSCGPGLDCVPVGDALVCA. Residues 174-293 are D10C; the sequence is DPCQEHRILD…CYLAYCTDPT (120 aa). Residues N234 and N246 are each glycosylated (N-linked (GlcNAc...) asparagine). N277 is a glycosylation site (N-linked (GlcNAc...) asparagine). In terms of domain architecture, EGF-like 4 spans 294–325; it reads SVLGTCEECSVEEDCKSHDGMWSCQCKQDFNV. N324 carries an N-linked (GlcNAc...) asparagine glycan. Positions 335–430 are ZP-N; sequence ECRPNDIKVS…KINFECSYPL (96 aa). In terms of domain architecture, ZP spans 335–590; that stretch reads ECRPNDIKVS…PTCSGTRFRS (256 aa). N397 and N448 each carry an N-linked (GlcNAc...) asparagine glycan. A flexible ZP-N/ZP-C linker; important for secretion and polymerization into filaments region spans residues 431–454; it reads DMKVSLETSLQPIVSSLNISVGGT. Residues 455-465 are internal hydrophobic patch (IHP); the sequence is GMFTVRMALFQ. Residues 455–590 are ZP-C; sequence GMFTVRMALF…PTCSGTRFRS (136 aa). Intrachain disulfides connect C507-C567, C528-C583, and C572-C579. N-linked (GlcNAc...) asparagine glycosylation is present at N514. Residues 587 to 590 form an essential for cleavage by HPN region; sequence RFRS. The segment at 599-607 is external hydrophobic patch (EHP); regulates polymerization into filaments; sequence VLNLGPITR. S620 is lipidated: GPI-anchor amidated serine. Residues 621-642 constitute a propeptide, removed in mature form; that stretch reads SLGFLKVCLPLLLSATLTLMFQ.

Homodimer that then polymerizes into long filaments. The filaments can additionally assemble laterally to form a sheet. The filaments consist of a zigzag-shaped backbone with laterally protruding arms which interact with bacterial adhesin fimH. Two fimH molecules can bind to a single UMOD monomer. In terms of processing, N-glycosylated. Post-translationally, proteolytically cleaved at a conserved C-terminal proteolytic cleavage site to generate the secreted form found in urine. This cleavage is catalyzed by HPN. In terms of tissue distribution, detected in kidney and pancreas.

The protein resides in the apical cell membrane. It localises to the basolateral cell membrane. Its subcellular location is the cell projection. It is found in the cilium membrane. The protein localises to the secreted. Its function is as follows. Functions in biogenesis and organization of the apical membrane of epithelial cells of the thick ascending limb of Henle's loop (TALH), where it promotes formation of complex filamentous gel-like structure that may play a role in the water barrier permeability. May serve as a receptor for binding and endocytosis of cytokines (IL-1, IL-2) and TNF. Facilitates neutrophil migration across renal epithelia. Functionally, in the urine, may contribute to colloid osmotic pressure, retards passage of positively charged electrolytes, and inhibits formation of liquid containing supersaturated salts and subsequent formation of salt crystals. Protects against urinary tract infections by binding to type 1 fimbriated E.coli. Binds to bacterial adhesin fimH which mediates the stable formation of bacterial aggregates, prevents the binding of E.coli to uroplakins UPK1A and UPK1B which act as urothelial receptors for type I fimbriae, and allows for pathogen clearance through micturation. Also promotes aggregation of other bacteria including K.pneumoniae, P.aeruginosa and S.mitis and so may also protect against other uropathogens. The protein is Uromodulin (UMOD) of Canis lupus familiaris (Dog).